The sequence spans 408 residues: MINALKGMKDLLDKDAYCYEKVIKTCEEVAKNYGFTFINTPHLELCTLFKRSVGESSDIVGKEMYEFIDKGENHVCMRPEGTAGVVRAYIEKKLDKNTSVKRWFYHGSMFRYERPQKGRLREFHQFGVESFGNASVYEDASIILMLVEIFSRLDIKFKLLINSLGCLKCMPKYRENLIHFLDSKEGFCEDCLRRKNLNPIRVLDCKNEHCQSLLNDAPLLNQNLCSSCQKDFEILQSVLKENGVDFEVDSKLVRGLDYYSKTAFEFISDEIGAKAAIAGGGRYDRLIEYLDGKSGFGVGFAMGIERIIAILEQKEEKVQREGIYLCAMDEIYIQKLLHIATNLRKEHKVLLSYEARKLAKHLENADKNNAEIFLCMGENEAQNESLFYKNLAKKEEKMIKISDLKKVL.

Belongs to the class-II aminoacyl-tRNA synthetase family. Homodimer.

It is found in the cytoplasm. It carries out the reaction tRNA(His) + L-histidine + ATP = L-histidyl-tRNA(His) + AMP + diphosphate + H(+). This is Histidine--tRNA ligase from Campylobacter jejuni subsp. jejuni serotype O:23/36 (strain 81-176).